A 104-amino-acid polypeptide reads, in one-letter code: Protein U9 (104 aa).

In Homo sapiens (Human), this protein is Protein U9 (U9).